The primary structure comprises 251 residues: 1-(5-phosphoribosyl)-5-[(5-phosphoribosylamino)methylideneamino] imidazole-4-carboxamide isomerase (251 aa).

D8 (proton acceptor) is an active-site residue. The Proton donor role is filled by D131.

The protein belongs to the HisA/HisF family.

It is found in the cytoplasm. It catalyses the reaction 1-(5-phospho-beta-D-ribosyl)-5-[(5-phospho-beta-D-ribosylamino)methylideneamino]imidazole-4-carboxamide = 5-[(5-phospho-1-deoxy-D-ribulos-1-ylimino)methylamino]-1-(5-phospho-beta-D-ribosyl)imidazole-4-carboxamide. Its pathway is amino-acid biosynthesis; L-histidine biosynthesis; L-histidine from 5-phospho-alpha-D-ribose 1-diphosphate: step 4/9. The sequence is that of 1-(5-phosphoribosyl)-5-[(5-phosphoribosylamino)methylideneamino] imidazole-4-carboxamide isomerase from Burkholderia pseudomallei (strain 1710b).